The following is a 505-amino-acid chain: Lysine--tRNA ligase (505 aa).

The Mg(2+) site is built by Glu-415 and Glu-422.

Belongs to the class-II aminoacyl-tRNA synthetase family. Homodimer. Requires Mg(2+) as cofactor.

It localises to the cytoplasm. The enzyme catalyses tRNA(Lys) + L-lysine + ATP = L-lysyl-tRNA(Lys) + AMP + diphosphate. This Pectobacterium atrosepticum (strain SCRI 1043 / ATCC BAA-672) (Erwinia carotovora subsp. atroseptica) protein is Lysine--tRNA ligase.